Reading from the N-terminus, the 474-residue chain is Probable cytosol aminopeptidase (474 aa).

Residues K237 and D242 each contribute to the Mn(2+) site. Residue K249 is part of the active site. The Mn(2+) site is built by D260, D319, and E321. Residue R323 is part of the active site.

Belongs to the peptidase M17 family. Mn(2+) is required as a cofactor.

The protein resides in the cytoplasm. The enzyme catalyses Release of an N-terminal amino acid, Xaa-|-Yaa-, in which Xaa is preferably Leu, but may be other amino acids including Pro although not Arg or Lys, and Yaa may be Pro. Amino acid amides and methyl esters are also readily hydrolyzed, but rates on arylamides are exceedingly low.. The catalysed reaction is Release of an N-terminal amino acid, preferentially leucine, but not glutamic or aspartic acids.. In terms of biological role, presumably involved in the processing and regular turnover of intracellular proteins. Catalyzes the removal of unsubstituted N-terminal amino acids from various peptides. The polypeptide is Probable cytosol aminopeptidase (Helicobacter hepaticus (strain ATCC 51449 / 3B1)).